Consider the following 236-residue polypeptide: Glucosamine-6-phosphate deaminase (236 aa).

Catalysis depends on D62, which acts as the Proton acceptor; for enolization step. Residue N128 is the For ring-opening step of the active site. Residue H130 is the Proton acceptor; for ring-opening step of the active site. Residue E135 is the For ring-opening step of the active site.

This sequence belongs to the glucosamine/galactosamine-6-phosphate isomerase family. NagB subfamily.

The enzyme catalyses alpha-D-glucosamine 6-phosphate + H2O = beta-D-fructose 6-phosphate + NH4(+). Its pathway is amino-sugar metabolism; N-acetylneuraminate degradation; D-fructose 6-phosphate from N-acetylneuraminate: step 5/5. Its function is as follows. Catalyzes the reversible isomerization-deamination of glucosamine 6-phosphate (GlcN6P) to form fructose 6-phosphate (Fru6P) and ammonium ion. The protein is Glucosamine-6-phosphate deaminase of Oenococcus oeni (strain ATCC BAA-331 / PSU-1).